The chain runs to 339 residues: Zinc metalloprotease MJ0392 (339 aa).

2 consecutive transmembrane segments (helical) span residues 10–30 and 33–53; these read IMGI…VIIG and IMNN…SVVL. Zn(2+) is bound at residue His54. The active site involves Glu55. Zn(2+) is bound at residue His58. A run of 2 helical transmembrane segments spans residues 96 to 116 and 125 to 145; these read IAGP…SQFF and LLYT…IPAF. Asp148 provides a ligand contact to Zn(2+). 2 helical membrane passes run 180 to 200 and 251 to 271; these read IMLL…SLFV and YFGY…IGNI. CBS domains lie at 226–281 and 281–335; these read MTPN…VRDY and YMEK…ELKE.

It belongs to the peptidase M50B family. As to quaternary structure, monomer. The cofactor is Zn(2+).

It is found in the cell membrane. Inhibited by 1,10-phenanthroline. Its function is as follows. A site-2 regulated intramembrane protease (S2P) that cleaves type-2 transmembrane proteins within their membrane-spanning domains; its endogenous substrate is unknown. Regulated intramembrane proteolysis (RIP) occurs when an extracytoplasmic signal triggers a concerted proteolytic cascade to transmit information and elicit cellular responses. A membrane-spanning regulatory substrate protein is first cut extracytoplasmically (site-1 protease, S1P), then within the membrane itself (site-2 protease, S2P, this enzyme), while cytoplasmic proteases finish degrading the regulatory protein, liberating the effector protein. Possible signals, S1P and substrates are unknown in this organism. In Methanocaldococcus jannaschii (strain ATCC 43067 / DSM 2661 / JAL-1 / JCM 10045 / NBRC 100440) (Methanococcus jannaschii), this protein is Zinc metalloprotease MJ0392.